A 379-amino-acid chain; its full sequence is UPF0754 membrane protein ABC1518 (379 aa).

The next 2 membrane-spanning stretches (helical) occupy residues 1–21 (MHWI…GAAT) and 358–378 (LLGG…VHFF).

This sequence belongs to the UPF0754 family.

Its subcellular location is the cell membrane. In Shouchella clausii (strain KSM-K16) (Alkalihalobacillus clausii), this protein is UPF0754 membrane protein ABC1518.